The following is a 387-amino-acid chain: Alanine racemase (387 aa).

Lys38 acts as the Proton acceptor; specific for D-alanine in catalysis. Lys38 is modified (N6-(pyridoxal phosphate)lysine). Arg136 is a substrate binding site. The Proton acceptor; specific for L-alanine role is filled by Tyr267. Met316 provides a ligand contact to substrate.

The protein belongs to the alanine racemase family. Pyridoxal 5'-phosphate is required as a cofactor.

The enzyme catalyses L-alanine = D-alanine. The protein operates within amino-acid biosynthesis; D-alanine biosynthesis; D-alanine from L-alanine: step 1/1. Its function is as follows. Catalyzes the interconversion of L-alanine and D-alanine. May also act on other amino acids. This is Alanine racemase (alr) from Clostridium tetani (strain Massachusetts / E88).